A 441-amino-acid chain; its full sequence is Keratin, type I cytoskeletal 17 (441 aa).

The disordered stretch occupies residues 1–23 (MTTTIRHFSSGSIKGSSGLAGGS). The segment at 1-91 (MTTTIRHFSS…GGVDGLLVGG (91 aa)) is head. Positions 9–23 (SSGSIKGSSGLAGGS) are enriched in low complexity. Ser-12 is subject to Phosphoserine. Lys-14 participates in a covalent cross-link: Glycyl lysine isopeptide (Lys-Gly) (interchain with G-Cter in SUMO1); alternate. Lys-14 is covalently cross-linked (Glycyl lysine isopeptide (Lys-Gly) (interchain with G-Cter in SUMO2); alternate). Ser-24, Ser-30, Ser-32, and Ser-37 each carry phosphoserine. Ser-42 carries the phosphoserine; by RPS6KA1 modification. Residues 92-128 (EKATMQNLNDRLASYLDKVRALEEANTELELKIRDWY) are coil 1A. The IF rod domain maps to 92–403 (EKATMQNLND…RLLEGEDAHL (312 aa)). Thr-118 carries the phosphothreonine modification. Residues 129–146 (QKQAPGPAPDYSSYFKTI) are linker 1. Residues 147–238 (EDLRNKIHTA…NHEEEMKALR (92 aa)) are coil 1B. The segment at 239 to 258 (GQVGGEINVEMDAAPGVDLS) is linker 12. Positions 259 to 400 (RILNEMRDQY…TYRRLLEGED (142 aa)) are coil 2. Residue Lys-286 forms a Glycyl lysine isopeptide (Lys-Gly) (interchain with G-Cter in SUMO2) linkage. The residue at position 287 (Thr-287) is a Phosphothreonine. The residue at position 331 (Ser-331) is a Phosphoserine. The interval 401-441 (AHLTQYKTKEPVTTRQVRTIVEEVQDGRVISSREQVHQTSH) is tail. Residues Lys-407 and Lys-409 each participate in a glycyl lysine isopeptide (Lys-Gly) (interchain with G-Cter in SUMO1); alternate cross-link. Residues Lys-407 and Lys-409 each participate in a glycyl lysine isopeptide (Lys-Gly) (interchain with G-Cter in SUMO2); alternate cross-link.

Belongs to the intermediate filament family. In terms of assembly, heterodimer of a type I and a type II keratin. KRT17 associates with KRT6 isomers (KRT6A or KRT6B). Interacts with TRADD and SFN. Post-translationally, phosphorylation at Ser-42 occurs in a growth- and stress-dependent fashion in skin keratinocytes, it has no effect on filament organization.

It is found in the cytoplasm. Functionally, type I keratin involved in the formation and maintenance of various skin appendages, specifically in determining shape and orientation of hair. Required for the correct growth of hair follicles, in particular for the persistence of the anagen (growth) state. Modulates the function of TNF-alpha in the specific context of hair cycling. Regulates protein synthesis and epithelial cell growth through binding to the adapter protein SFN and by stimulating Akt/mTOR pathway. Involved in tissue repair. May be a marker of basal cell differentiation in complex epithelia and therefore indicative of a certain type of epithelial 'stem cells'. Acts as a promoter of epithelial proliferation by acting a regulator of immune response in skin: promotes Th1/Th17-dominated immune environment contributing to the development of basaloid skin tumors. May act as an autoantigen in the immunopathogenesis of psoriasis, with certain peptide regions being a major target for autoreactive T-cells and hence causing their proliferation. This is Keratin, type I cytoskeletal 17 from Bos taurus (Bovine).